The sequence spans 198 residues: V-type ATP synthase subunit E (198 aa).

The protein belongs to the V-ATPase E subunit family.

Its function is as follows. Produces ATP from ADP in the presence of a proton gradient across the membrane. This Clostridium perfringens (strain SM101 / Type A) protein is V-type ATP synthase subunit E.